The following is a 203-amino-acid chain: MFLLSRFSDIISIHPSNFWKPTKEALAEEIHKKYANKVIQNIGLAICVYDFLKIGEGIIKYGDGSSYMNVVFRLIIFRPFRGEVMLGKIKSCSEEGIRVTISFFDDIFIPKDMLFDPCVFRPDERAWVWKIEGEDGSEGTELYFDIDEEIRFQIESEDFVDISPKRNKNATAITGTEALESVSPYTLIASCSRDGLGIPAWWK.

It belongs to the eukaryotic RPB7/RPC8 RNA polymerase subunit family. Component of the RNA polymerase III (Pol III) complex consisting of 17 subunits. Rpc25/rpc8 and rpc17/rpc9 form a Pol III subcomplex.

Its subcellular location is the cytoplasm. It is found in the nucleus. In terms of biological role, DNA-dependent RNA polymerase catalyzes the transcription of DNA into RNA using the four ribonucleoside triphosphates as substrates. Specific peripheric component of RNA polymerase III which synthesizes small RNAs, such as 5S rRNA and tRNA. The protein is DNA-directed RNA polymerase III subunit rpc8 (rpc25) of Schizosaccharomyces pombe (strain 972 / ATCC 24843) (Fission yeast).